We begin with the raw amino-acid sequence, 443 residues long: DNA double-strand break repair protein Mre11 (443 aa).

Mn(2+)-binding residues include Asp8, His10, Asp49, and Asn84. Catalysis depends on His85, which acts as the Proton donor. His169, His201, and His203 together coordinate Mn(2+). Residues Gln382–Arg429 are disordered. A compositionally biased stretch (basic and acidic residues) spans Thr395–Lys423.

Belongs to the MRE11/RAD32 family. In terms of assembly, homodimer. Forms a heterotetramer composed of two Mre11 subunits and two Rad50 subunits. It depends on Mn(2+) as a cofactor.

With respect to regulation, nuclease activity is regulated by Rad50. Its function is as follows. Part of the Rad50/Mre11 complex, which is involved in the early steps of DNA double-strand break (DSB) repair. The complex may facilitate opening of the processed DNA ends to aid in the recruitment of HerA and NurA. Mre11 binds to DSB ends and has both double-stranded 3'-5' exonuclease activity and single-stranded endonuclease activity. The chain is DNA double-strand break repair protein Mre11 from Archaeoglobus fulgidus (strain ATCC 49558 / DSM 4304 / JCM 9628 / NBRC 100126 / VC-16).